The following is a 637-amino-acid chain: Biosynthetic arginine decarboxylase (637 aa).

At Lys101 the chain carries N6-(pyridoxal phosphate)lysine. Residue 286–296 (FDVGGGLAVDY) participates in substrate binding.

This sequence belongs to the Orn/Lys/Arg decarboxylase class-II family. SpeA subfamily. It depends on Mg(2+) as a cofactor. The cofactor is pyridoxal 5'-phosphate.

The enzyme catalyses L-arginine + H(+) = agmatine + CO2. It participates in amine and polyamine biosynthesis; agmatine biosynthesis; agmatine from L-arginine: step 1/1. In terms of biological role, catalyzes the biosynthesis of agmatine from arginine. This is Biosynthetic arginine decarboxylase from Shewanella piezotolerans (strain WP3 / JCM 13877).